Here is a 159-residue protein sequence, read N- to C-terminus: MKLNELSPADGSTKKRMRVGRGVGSGKGKTAGRGVKGQNARSGVAVNGFEGGQMPIYMRLPKRGFTSPGSKNMSWVNLGRIAKAIEAGTLDASNVTEESLVAAGVVRKARDGIRLLAKGDAPQKLTITVTGASKAAVEAVEKAGGSVTVTGAPKDAAEE.

Residues methionine 1 to asparagine 39 form a disordered region. Gly residues predominate over residues arginine 21–valine 35.

The protein belongs to the universal ribosomal protein uL15 family. As to quaternary structure, part of the 50S ribosomal subunit.

Its function is as follows. Binds to the 23S rRNA. This is Large ribosomal subunit protein uL15 from Hyphomonas neptunium (strain ATCC 15444).